The primary structure comprises 428 residues: MTEAMKITLSTLPADARWGEKATWSINNDGIALHLNGKDDLGLIQRAARKIDGMGIKHVALSGEGWNTDRAWAFWAGYKGPKGQRQVEWPTLDDAQRSELDNRLTIIDWVRDTINAPAEELGPEQLAQRAVDLLCGVAGEKVSYRITKGEDLREQNYLGLHTVGRGSERPPVLLALDYNPTGDKDAPVYACLVGKGITFDSGGYSIKQSAFMDSMKSDMGGAATITGALAFAITRGLNKRVKLYLCCADNLISGNAFKLGDIIHYRNGKTVEVMNTDAEGRLVLADGLIDASAQKPALIIDAATLTGAAKTALGNDYHALFSFDDALANRLLASAQAENEAFWRLPLAEFHRNQLPSNFAELNNTGSAAYPAGASTAAGFLSHFVENYHQGWLHIDCSATYRKSAVEQWSAGATGLGVRTIANLLTAE.

Lys-195 and Asp-200 together coordinate Mn(2+). Lys-207 is a catalytic residue. Mn(2+) contacts are provided by Asp-218, Asp-277, and Glu-279. Arg-281 is an active-site residue.

It belongs to the peptidase M17 family. As to quaternary structure, homohexamer. It depends on Mn(2+) as a cofactor.

Its subcellular location is the cytoplasm. The catalysed reaction is Release of an N-terminal amino acid, Xaa, from a peptide or arylamide. Xaa is preferably Glu or Asp but may be other amino acids, including Leu, Met, His, Cys and Gln.. Functionally, probably plays an important role in intracellular peptide degradation. The sequence is that of Peptidase B from Klebsiella pneumoniae (strain 342).